The following is a 559-amino-acid chain: Dihydroxy-acid dehydratase (559 aa).

Asp78 lines the Mg(2+) pocket. Residue Cys119 participates in [2Fe-2S] cluster binding. Residues Asp120 and Lys121 each contribute to the Mg(2+) site. Lys121 carries the post-translational modification N6-carboxylysine. Cys192 is a binding site for [2Fe-2S] cluster. Position 446 (Glu446) interacts with Mg(2+). Ser472 acts as the Proton acceptor in catalysis.

This sequence belongs to the IlvD/Edd family. In terms of assembly, homodimer. Requires [2Fe-2S] cluster as cofactor. The cofactor is Mg(2+).

The catalysed reaction is (2R)-2,3-dihydroxy-3-methylbutanoate = 3-methyl-2-oxobutanoate + H2O. It carries out the reaction (2R,3R)-2,3-dihydroxy-3-methylpentanoate = (S)-3-methyl-2-oxopentanoate + H2O. It participates in amino-acid biosynthesis; L-isoleucine biosynthesis; L-isoleucine from 2-oxobutanoate: step 3/4. Its pathway is amino-acid biosynthesis; L-valine biosynthesis; L-valine from pyruvate: step 3/4. Functions in the biosynthesis of branched-chain amino acids. Catalyzes the dehydration of (2R,3R)-2,3-dihydroxy-3-methylpentanoate (2,3-dihydroxy-3-methylvalerate) into 2-oxo-3-methylpentanoate (2-oxo-3-methylvalerate) and of (2R)-2,3-dihydroxy-3-methylbutanoate (2,3-dihydroxyisovalerate) into 2-oxo-3-methylbutanoate (2-oxoisovalerate), the penultimate precursor to L-isoleucine and L-valine, respectively. In Wolinella succinogenes (strain ATCC 29543 / DSM 1740 / CCUG 13145 / JCM 31913 / LMG 7466 / NCTC 11488 / FDC 602W) (Vibrio succinogenes), this protein is Dihydroxy-acid dehydratase.